Here is a 302-residue protein sequence, read N- to C-terminus: tRNA dimethylallyltransferase (302 aa).

10 to 17 lines the ATP pocket; the sequence is GPTAIGKT. 12–17 serves as a coordination point for substrate; it reads TAIGKT. Residues 35 to 38 are interaction with substrate tRNA; it reads DSRQ.

The protein belongs to the IPP transferase family. In terms of assembly, monomer. It depends on Mg(2+) as a cofactor.

It carries out the reaction adenosine(37) in tRNA + dimethylallyl diphosphate = N(6)-dimethylallyladenosine(37) in tRNA + diphosphate. Functionally, catalyzes the transfer of a dimethylallyl group onto the adenine at position 37 in tRNAs that read codons beginning with uridine, leading to the formation of N6-(dimethylallyl)adenosine (i(6)A). This chain is tRNA dimethylallyltransferase, found in Christiangramia forsetii (strain DSM 17595 / CGMCC 1.15422 / KT0803) (Gramella forsetii).